We begin with the raw amino-acid sequence, 469 residues long: uncharacterized protein (469 aa).

Residues 203 to 244 (ACPVPPQGHASSAADQAGVPERGRKRAHEGPGAGEAASAGRG) form a disordered region.

The protein belongs to the epstein-barr virus LF1 family.

This is an uncharacterized protein from Homo sapiens (Human).